The sequence spans 259 residues: UBX domain-containing protein 2A (259 aa).

Residues 1-151 (MKDVDNLKSI…SATPKIVSKA (151 aa)) form a required for interaction with CHRNA3 region. A required for inhibition of CHRNA3 ubiquitination and translocation of CHRNA3 to the plasma membrane resulting in an increase in acetylcholine-gated nicotinic acetylcholine receptor currents region spans residues 1-164 (MKDVDNLKSI…EVENKNNLSA (164 aa)). The region spanning 60-124 (QVDVNIKLWK…VEDKKNEICL (65 aa)) is the SEP domain. Residues 167–259 (LNNLEPITNI…TASFRELSEH (93 aa)) are required for interaction with VCP. A UBX domain is found at 169–246 (NLEPITNIQI…DLQNAVIIQR (78 aa)).

In terms of assembly, part of a complex composed of STUB1/CHIP, VCP/p97, CHRNA3, and UBXN2A that modulates the ubiquitination and endoplasmic reticulum-associated degradation (ERAD) of CHRNA3. Within the complex UBXN2A acts as a scaffold protein required for the interaction of CHRNA3 with VCP/p97, this interaction also inhibits CHRNA3 ubiquitination by STUB1/CHIP and subsequently ERAD. Interacts (via SEP domain) with CHRNA3 and interacts (via UBX domain) with VCP/P97; these interactions are required for the interaction of CHRNA3 with the STUB1-VCP-UBXN2A complex. Interacts with HSPA9/MOT-2 (via SBD domain); the interaction inhibits HSPA9/MOT-2 interaction with and degradation of p53, thereby promotes p53 translocation to the nucleus. Interacts with RICTOR. Ubiquitinated. Expressed in the colon (at protein level).

The protein localises to the golgi apparatus. The protein resides in the endoplasmic reticulum. It is found in the perikaryon. It localises to the cell projection. Its subcellular location is the dendrite. The protein localises to the nucleus. The protein resides in the cytoplasm. In terms of biological role, acts to repress the ubiquitination and subsequent endoplasmic reticulum-associated degradation of CHRNA3 by the STUB1-VCP-UBXN2A complex in cortical neurons. Also acts to promote the translocation of CHRNA3 to the plasma membrane and subsequently increases plasma membrane acetylcholine-gated ion-channel activation. Plays a role in the inhibition of STUB1-mediated TP53 degradation, via its interaction with HSPA9 which acts to inhibit TP53 binding to HSPA9. Positively mediates the ubiquitination and proteosomal degradation of RICTOR, may thereby act as a negative regulator of the mTORC2 pathway. The polypeptide is UBX domain-containing protein 2A (Homo sapiens (Human)).